The chain runs to 180 residues: Large ribosomal subunit protein uL6 (180 aa).

It belongs to the universal ribosomal protein uL6 family. As to quaternary structure, part of the 50S ribosomal subunit.

Its function is as follows. This protein binds to the 23S rRNA, and is important in its secondary structure. It is located near the subunit interface in the base of the L7/L12 stalk, and near the tRNA binding site of the peptidyltransferase center. This is Large ribosomal subunit protein uL6 from Thermoanaerobacter sp. (strain X514).